A 503-amino-acid polypeptide reads, in one-letter code: ATP synthase subunit alpha (503 aa).

170-177 (GDRQTGKT) contributes to the ATP binding site.

Belongs to the ATPase alpha/beta chains family. In terms of assembly, F-type ATPases have 2 components, CF(1) - the catalytic core - and CF(0) - the membrane proton channel. CF(1) has five subunits: alpha(3), beta(3), gamma(1), delta(1), epsilon(1). CF(0) has three main subunits: a(1), b(2) and c(9-12). The alpha and beta chains form an alternating ring which encloses part of the gamma chain. CF(1) is attached to CF(0) by a central stalk formed by the gamma and epsilon chains, while a peripheral stalk is formed by the delta and b chains.

It is found in the cell membrane. The catalysed reaction is ATP + H2O + 4 H(+)(in) = ADP + phosphate + 5 H(+)(out). Produces ATP from ADP in the presence of a proton gradient across the membrane. The alpha chain is a regulatory subunit. In Brevibacillus brevis (strain 47 / JCM 6285 / NBRC 100599), this protein is ATP synthase subunit alpha.